Reading from the N-terminus, the 702-residue chain is Ribosomal RNA large subunit methyltransferase K/L (702 aa).

The THUMP domain maps to 43-154 (LIYQSLMWSR…KETASIALDL (112 aa)).

It belongs to the methyltransferase superfamily. RlmKL family.

Its subcellular location is the cytoplasm. It carries out the reaction guanosine(2445) in 23S rRNA + S-adenosyl-L-methionine = N(2)-methylguanosine(2445) in 23S rRNA + S-adenosyl-L-homocysteine + H(+). The enzyme catalyses guanosine(2069) in 23S rRNA + S-adenosyl-L-methionine = N(2)-methylguanosine(2069) in 23S rRNA + S-adenosyl-L-homocysteine + H(+). In terms of biological role, specifically methylates the guanine in position 2445 (m2G2445) and the guanine in position 2069 (m7G2069) of 23S rRNA. This is Ribosomal RNA large subunit methyltransferase K/L from Salmonella schwarzengrund (strain CVM19633).